Consider the following 53-residue polypeptide: uncharacterized protein (53 aa).

Low complexity predominate over residues 14-33 (SPSSLNNNNNINSKSLQINS). Residues 14 to 53 (SPSSLNNNNNINSKSLQINSENKSKIQNNNPLGNKGGVQF) form a disordered region.

This is an uncharacterized protein from Dictyostelium discoideum (Social amoeba).